Consider the following 441-residue polypeptide: Putative collagenous domain-containing protein R238 (441 aa).

The Collagen-like domain occupies 164–199 (GCKGEKGIKGELGPKGNTGQKGDIGSKGDRGDKGEP). The segment at 171–198 (IKGELGPKGNTGQKGDIGSKGDRGDKGE) is disordered. The span at 187-198 (IGSKGDRGDKGE) shows a compositional bias: basic and acidic residues.

This Acanthamoeba polyphaga (Amoeba) protein is Putative collagenous domain-containing protein R238.